A 628-amino-acid chain; its full sequence is tRNA uridine 5-carboxymethylaminomethyl modification enzyme MnmG (628 aa).

Gly13–Gly18 is an FAD binding site. Residue Gly281 to Phe295 participates in NAD(+) binding.

The protein belongs to the MnmG family. Homodimer. Heterotetramer of two MnmE and two MnmG subunits. FAD is required as a cofactor.

It localises to the cytoplasm. NAD-binding protein involved in the addition of a carboxymethylaminomethyl (cmnm) group at the wobble position (U34) of certain tRNAs, forming tRNA-cmnm(5)s(2)U34. The polypeptide is tRNA uridine 5-carboxymethylaminomethyl modification enzyme MnmG (Treponema denticola (strain ATCC 35405 / DSM 14222 / CIP 103919 / JCM 8153 / KCTC 15104)).